Reading from the N-terminus, the 414-residue chain is 3-phosphoshikimate 1-carboxyvinyltransferase (414 aa).

Residues Lys20, Ser21, and Arg25 each coordinate 3-phosphoshikimate. A phosphoenolpyruvate-binding site is contributed by Lys20. The phosphoenolpyruvate site is built by Gly85 and Arg113. Residues Ser154, Ser155, Gln156, Ser181, Asp296, and Lys323 each contribute to the 3-phosphoshikimate site. Gln156 provides a ligand contact to phosphoenolpyruvate. Asp296 serves as the catalytic Proton acceptor. Arg327, Arg371, and Lys395 together coordinate phosphoenolpyruvate.

Belongs to the EPSP synthase family. In terms of assembly, monomer.

The protein localises to the cytoplasm. The enzyme catalyses 3-phosphoshikimate + phosphoenolpyruvate = 5-O-(1-carboxyvinyl)-3-phosphoshikimate + phosphate. It functions in the pathway metabolic intermediate biosynthesis; chorismate biosynthesis. Functionally, catalyzes the transfer of the enolpyruvyl moiety of phosphoenolpyruvate (PEP) to the 5-hydroxyl of shikimate-3-phosphate (S3P) to produce enolpyruvyl shikimate-3-phosphate and inorganic phosphate. In Saccharolobus islandicus (strain Y.G.57.14 / Yellowstone #1) (Sulfolobus islandicus), this protein is 3-phosphoshikimate 1-carboxyvinyltransferase.